Consider the following 78-residue polypeptide: Putative membrane protein insertion efficiency factor (78 aa).

This sequence belongs to the UPF0161 family.

It is found in the cell membrane. In terms of biological role, could be involved in insertion of integral membrane proteins into the membrane. The chain is Putative membrane protein insertion efficiency factor from Limosilactobacillus reuteri (strain DSM 20016) (Lactobacillus reuteri).